Consider the following 460-residue polypeptide: Ribulose bisphosphate carboxylase (460 aa).

Asn-112 lines the substrate pocket. Lys-167 acts as the Proton acceptor in catalysis. A substrate-binding site is contributed by Lys-169. Mg(2+) is bound by residues Lys-192, Asp-194, and Glu-195. Lys-192 is subject to N6-carboxylysine. His-288 serves as the catalytic Proton acceptor. Substrate is bound by residues Arg-289, His-322, and Ser-369.

It belongs to the RuBisCO large chain family. Type II subfamily. Homodimer. Mg(2+) is required as a cofactor.

It catalyses the reaction 2 (2R)-3-phosphoglycerate + 2 H(+) = D-ribulose 1,5-bisphosphate + CO2 + H2O. The catalysed reaction is D-ribulose 1,5-bisphosphate + O2 = 2-phosphoglycolate + (2R)-3-phosphoglycerate + 2 H(+). In terms of biological role, ruBisCO catalyzes two reactions: the carboxylation of D-ribulose 1,5-bisphosphate, the primary event in carbon dioxide fixation, as well as the oxidative fragmentation of the pentose substrate. Both reactions occur simultaneously and in competition at the same active site. The protein is Ribulose bisphosphate carboxylase of Rhodopseudomonas palustris (strain BisA53).